Here is a 467-residue protein sequence, read N- to C-terminus: Probable serine hydroxymethyltransferase, cytosolic (467 aa).

Position 243 is an N6-(pyridoxal phosphate)lysine (Lys243).

This sequence belongs to the SHMT family. Homotetramer. Requires pyridoxal 5'-phosphate as cofactor.

The protein localises to the cytoplasm. The enzyme catalyses (6R)-5,10-methylene-5,6,7,8-tetrahydrofolate + glycine + H2O = (6S)-5,6,7,8-tetrahydrofolate + L-serine. The protein operates within one-carbon metabolism; tetrahydrofolate interconversion. Functionally, interconversion of serine and glycine. The protein is Probable serine hydroxymethyltransferase, cytosolic of Schizosaccharomyces pombe (strain 972 / ATCC 24843) (Fission yeast).